Consider the following 165-residue polypeptide: Nucleotide-binding protein Ccon26_01810 (165 aa).

This sequence belongs to the YajQ family.

Its function is as follows. Nucleotide-binding protein. The protein is Nucleotide-binding protein Ccon26_01810 of Campylobacter concisus (strain 13826).